The sequence spans 101 residues: Integration host factor subunit beta (101 aa).

The tract at residues 57–101 (PARAGRNPRTGAHVPVDQKSVPFFKTGKEMRERLNRDHPDPGAAD) is disordered. Residues 82–101 (TGKEMRERLNRDHPDPGAAD) show a composition bias toward basic and acidic residues.

It belongs to the bacterial histone-like protein family. In terms of assembly, heterodimer of an alpha and a beta chain.

This protein is one of the two subunits of integration host factor, a specific DNA-binding protein that functions in genetic recombination as well as in transcriptional and translational control. The chain is Integration host factor subunit beta from Bradyrhizobium diazoefficiens (strain JCM 10833 / BCRC 13528 / IAM 13628 / NBRC 14792 / USDA 110).